The sequence spans 212 residues: Dephospho-CoA kinase (212 aa).

A DPCK domain is found at 6–211 (RLGLTGGIGS…LSCQPLSPNQ (206 aa)). 14-19 (GSGKST) contacts ATP.

The protein belongs to the CoaE family.

The protein resides in the cytoplasm. The catalysed reaction is 3'-dephospho-CoA + ATP = ADP + CoA + H(+). Its pathway is cofactor biosynthesis; coenzyme A biosynthesis; CoA from (R)-pantothenate: step 5/5. Catalyzes the phosphorylation of the 3'-hydroxyl group of dephosphocoenzyme A to form coenzyme A. The protein is Dephospho-CoA kinase of Albidiferax ferrireducens (strain ATCC BAA-621 / DSM 15236 / T118) (Rhodoferax ferrireducens).